The sequence spans 26 residues: Orexigenic neuropeptide 26RFa (26 aa).

F26 bears the Phenylalanine amide mark.

Brain.

The protein localises to the secreted. In terms of biological role, may have orexigenic activity. May promote aldosterone secretion by the adrenal gland. The chain is Orexigenic neuropeptide 26RFa from Pelophylax lessonae (Pool frog).